Reading from the N-terminus, the 254-residue chain is tRNA (guanine-N(1)-)-methyltransferase (254 aa).

S-adenosyl-L-methionine contacts are provided by residues Gly-114 and 134 to 139; that span reads IGDYVL.

Belongs to the RNA methyltransferase TrmD family. In terms of assembly, homodimer.

Its subcellular location is the cytoplasm. The enzyme catalyses guanosine(37) in tRNA + S-adenosyl-L-methionine = N(1)-methylguanosine(37) in tRNA + S-adenosyl-L-homocysteine + H(+). Its function is as follows. Specifically methylates guanosine-37 in various tRNAs. This chain is tRNA (guanine-N(1)-)-methyltransferase, found in Desulforamulus reducens (strain ATCC BAA-1160 / DSM 100696 / MI-1) (Desulfotomaculum reducens).